Reading from the N-terminus, the 445-residue chain is Tubulin alpha-3 chain (445 aa).

Gln-11, Glu-72, Ser-141, Gly-145, Thr-146, Thr-180, Asn-207, and Asn-229 together coordinate GTP. Residue Glu-72 coordinates Mg(2+). Glu-255 is an active-site residue.

Belongs to the tubulin family. As to quaternary structure, dimer of alpha and beta chains. A typical microtubule is a hollow water-filled tube with an outer diameter of 25 nm and an inner diameter of 15 nM. Alpha-beta heterodimers associate head-to-tail to form protofilaments running lengthwise along the microtubule wall with the beta-tubulin subunit facing the microtubule plus end conferring a structural polarity. Microtubules usually have 13 protofilaments but different protofilament numbers can be found in some organisms and specialized cells. Interacts with NUM1. The cofactor is Mg(2+).

The protein resides in the cytoplasm. It localises to the cytoskeleton. The catalysed reaction is GTP + H2O = GDP + phosphate + H(+). Functionally, tubulin is the major constituent of microtubules, a cylinder consisting of laterally associated linear protofilaments composed of alpha- and beta-tubulin heterodimers. Microtubules grow by the addition of GTP-tubulin dimers to the microtubule end, where a stabilizing cap forms. Below the cap, tubulin dimers are in GDP-bound state, owing to GTPase activity of alpha-tubulin. This is Tubulin alpha-3 chain (TUB3) from Saccharomyces cerevisiae (strain ATCC 204508 / S288c) (Baker's yeast).